The following is a 154-amino-acid chain: Large ribosomal subunit protein uL30 (154 aa).

It belongs to the universal ribosomal protein uL30 family. As to quaternary structure, part of the 50S ribosomal subunit.

In Methanococcus maripaludis (strain DSM 14266 / JCM 13030 / NBRC 101832 / S2 / LL), this protein is Large ribosomal subunit protein uL30.